Reading from the N-terminus, the 65-residue chain is Large ribosomal subunit protein bL35 (65 aa).

3 stretches are compositionally biased toward basic residues: residues 1 to 18 (MPKMKTKSAAAKRFKRTA), 31 to 44 (HRFHGKTKKQRRQL), and 55 to 65 (VKRYKKMIPAK). The segment at 1-65 (MPKMKTKSAA…KRYKKMIPAK (65 aa)) is disordered.

This sequence belongs to the bacterial ribosomal protein bL35 family.

In Limosilactobacillus fermentum (strain NBRC 3956 / LMG 18251) (Lactobacillus fermentum), this protein is Large ribosomal subunit protein bL35.